The sequence spans 444 residues: L-seryl-tRNA(Sec) selenium transferase (444 aa).

Residue Lys-284 is modified to N6-(pyridoxal phosphate)lysine.

This sequence belongs to the SelA family. Requires pyridoxal 5'-phosphate as cofactor.

It is found in the cytoplasm. It carries out the reaction L-seryl-tRNA(Sec) + selenophosphate + H(+) = L-selenocysteinyl-tRNA(Sec) + phosphate. It participates in aminoacyl-tRNA biosynthesis; selenocysteinyl-tRNA(Sec) biosynthesis; selenocysteinyl-tRNA(Sec) from L-seryl-tRNA(Sec) (bacterial route): step 1/1. Functionally, converts seryl-tRNA(Sec) to selenocysteinyl-tRNA(Sec) required for selenoprotein biosynthesis. This is L-seryl-tRNA(Sec) selenium transferase from Wolinella succinogenes (strain ATCC 29543 / DSM 1740 / CCUG 13145 / JCM 31913 / LMG 7466 / NCTC 11488 / FDC 602W) (Vibrio succinogenes).